A 344-amino-acid chain; its full sequence is MGNLFSRTKSPATELERVVLSIEDFKKRLQTISASNSSTLYYYYMGVIIILSIAMAHTWLRFDDPTKTYVACALVFGATVIVLTGRYIINCFFAWRTNRTTQKLENAITQKTVLLDLVKETLKFKEAKEILDRYEEKTEAGNTPTENSKLIHQQKQQNETLVSKTIMKPDQKRVETPVSQKPVPSKPGIAFDSMNMTPYQQRNSNATPVRPFLRQSTALDRILDYFMSDGPNCRNALICSICHTHNGMSVPAEYPFISFRCFECGHLNAAKKMGPHLPITRPPMGPKGIQHNGRAGPVPPKNQQPVVPMENPNPSTDLTPSASQHGSDSEPEKNADETAVVEKS.

The Cytoplasmic portion of the chain corresponds to 1 to 39 (MGNLFSRTKSPATELERVVLSIEDFKKRLQTISASNSST). A helical membrane pass occupies residues 40–60 (LYYYYMGVIIILSIAMAHTWL). At 61–68 (RFDDPTKT) the chain is on the lumenal side. A helical membrane pass occupies residues 69–89 (YVACALVFGATVIVLTGRYII). Topologically, residues 90–344 (NCFFAWRTNR…ADETAVVEKS (255 aa)) are cytoplasmic. Residues 116–140 (DLVKETLKFKEAKEILDRYEEKTEA) are a coiled coil. 2 disordered regions span residues 136–155 (EKTE…HQQK) and 171–192 (QKRV…IAFD). Residues 140–155 (AGNTPTENSKLIHQQK) are compositionally biased toward polar residues. The C4-type; plays a role in ER morphology zinc finger occupies 239-264 (CSICHTHNGMSVPAEYPFISFRCFEC). The segment at 275–344 (PHLPITRPPM…ADETAVVEKS (70 aa)) is disordered. A compositionally biased stretch (polar residues) spans 312–326 (PNPSTDLTPSASQHG). The span at 327 to 344 (SDSEPEKNADETAVVEKS) shows a compositional bias: basic and acidic residues.

It belongs to the lunapark family.

Its subcellular location is the endoplasmic reticulum membrane. Its function is as follows. Plays a role in tubular endoplasmic reticulum network formation and maintenance. May be involved in central nervous system development. Has a presynaptic role in neurotransmission. Likely to operate in synaptogenesis by regulating vesicular transport or localization. Required for correct localization of rab-3 and snb-1. In Caenorhabditis briggsae, this protein is Endoplasmic reticulum junction formation protein lunapark-1.